The primary structure comprises 60 residues: DNA-directed RNA polymerase subunit Rpo6 (60 aa).

The protein belongs to the archaeal Rpo6/eukaryotic RPB6 RNA polymerase subunit family. As to quaternary structure, part of the RNA polymerase complex.

The protein localises to the cytoplasm. The enzyme catalyses RNA(n) + a ribonucleoside 5'-triphosphate = RNA(n+1) + diphosphate. DNA-dependent RNA polymerase (RNAP) catalyzes the transcription of DNA into RNA using the four ribonucleoside triphosphates as substrates. In Methanosarcina acetivorans (strain ATCC 35395 / DSM 2834 / JCM 12185 / C2A), this protein is DNA-directed RNA polymerase subunit Rpo6.